The sequence spans 249 residues: UDP-N-acetyl-D-mannosaminuronic acid transferase (249 aa).

The protein belongs to the glycosyltransferase 26 family.

It carries out the reaction UDP-N-acetyl-alpha-D-mannosaminouronate + N-acetyl-alpha-D-glucosaminyl-di-trans,octa-cis-undecaprenyl diphosphate = beta-D-ManNAcA-(1-&gt;4)-alpha-D-GlcNAc-di-trans,octa-cis-undecaprenyl diphosphate + UDP + H(+). The protein operates within bacterial outer membrane biogenesis; enterobacterial common antigen biosynthesis. Catalyzes the synthesis of Und-PP-GlcNAc-ManNAcA (Lipid II), the second lipid-linked intermediate involved in enterobacterial common antigen (ECA) synthesis. The chain is UDP-N-acetyl-D-mannosaminuronic acid transferase from Pectobacterium atrosepticum (strain SCRI 1043 / ATCC BAA-672) (Erwinia carotovora subsp. atroseptica).